A 711-amino-acid polypeptide reads, in one-letter code: Ribosomal RNA large subunit methyltransferase K/L (711 aa).

In terms of domain architecture, THUMP spans Asp42–Leu153.

This sequence belongs to the methyltransferase superfamily. RlmKL family.

It is found in the cytoplasm. It carries out the reaction guanosine(2445) in 23S rRNA + S-adenosyl-L-methionine = N(2)-methylguanosine(2445) in 23S rRNA + S-adenosyl-L-homocysteine + H(+). The enzyme catalyses guanosine(2069) in 23S rRNA + S-adenosyl-L-methionine = N(2)-methylguanosine(2069) in 23S rRNA + S-adenosyl-L-homocysteine + H(+). In terms of biological role, specifically methylates the guanine in position 2445 (m2G2445) and the guanine in position 2069 (m7G2069) of 23S rRNA. In Xanthomonas campestris pv. campestris (strain B100), this protein is Ribosomal RNA large subunit methyltransferase K/L.